Reading from the N-terminus, the 48-residue chain is Delta-stichotoxin-Hcr1a (48 aa).

Disulfide bonds link C3–C43, C5–C33, and C26–C44. The residue at position 48 (K48) is a Lysine amide; partial; in Delta-stichotoxin-Hcr1f.

It belongs to the sea anemone sodium channel inhibitory toxin family. Type II subfamily. Probably composed of two peptide chains of 12 and 35 residues connected by two disulfide bonds (Cys-3-Cys-43 and Cys-5-Cys-33). In terms of processing, delta-SHTX-Hcr1f (RTX-VI) may be the result of post-translational modification of delta-SHTX-Hcr1a (RTX-III), which would consist of Arg-13 cleavage.

Its subcellular location is the secreted. The protein localises to the nematocyst. Binds to site 3 of voltage-gated sodium channels and inhibits the inactivation process. Specifically inhibits mammalian Nav1.3/SCN3A and Nav1.6/SCN8A sodium channels, as well as insect BgNav1 and VdNav1 sodium channels. Functionally, binds to site 3 of voltage-gated sodium channels and inhibits the inactivation process. Specifically inhibits mammalian Nav1.2/SCN3A (low inhibition) and Nav1.6/SCN8A sodium channels, as well as insect BgNav1 and VdNav1 sodium channels. This chain is Delta-stichotoxin-Hcr1a, found in Radianthus crispa (Leathery sea anemone).